Here is a 331-residue protein sequence, read N- to C-terminus: 6-phosphogluconolactonase (331 aa).

Belongs to the cycloisomerase 2 family.

The catalysed reaction is 6-phospho-D-glucono-1,5-lactone + H2O = 6-phospho-D-gluconate + H(+). Its pathway is carbohydrate degradation; pentose phosphate pathway; D-ribulose 5-phosphate from D-glucose 6-phosphate (oxidative stage): step 2/3. In terms of biological role, catalyzes the hydrolysis of 6-phosphogluconolactone to 6-phosphogluconate. This chain is 6-phosphogluconolactonase, found in Salmonella paratyphi B (strain ATCC BAA-1250 / SPB7).